Consider the following 49-residue polypeptide: Defensin Tk-AMP-D2 (49 aa).

Cystine bridges form between C3-C49, C14-C34, C20-C43, and C24-C45.

Plant defense peptide. This is Defensin Tk-AMP-D2 from Triticum kiharae (Wheat).